The following is a 425-amino-acid chain: Glutamyl-tRNA(Gln) amidotransferase subunit A (425 aa).

Residues Lys29 and Ser104 each act as charge relay system in the active site. The active-site Acyl-ester intermediate is the Ser128.

It belongs to the amidase family. GatA subfamily. Heterotrimer of A, B and C subunits.

It carries out the reaction L-glutamyl-tRNA(Gln) + L-glutamine + ATP + H2O = L-glutaminyl-tRNA(Gln) + L-glutamate + ADP + phosphate + H(+). In terms of biological role, allows the formation of correctly charged Gln-tRNA(Gln) through the transamidation of misacylated Glu-tRNA(Gln) in organisms which lack glutaminyl-tRNA synthetase. The reaction takes place in the presence of glutamine and ATP through an activated gamma-phospho-Glu-tRNA(Gln). This Haloarcula marismortui (strain ATCC 43049 / DSM 3752 / JCM 8966 / VKM B-1809) (Halobacterium marismortui) protein is Glutamyl-tRNA(Gln) amidotransferase subunit A.